A 227-amino-acid chain; its full sequence is ATP-dependent dethiobiotin synthetase BioD (227 aa).

13 to 18 contributes to the ATP binding site; it reads EVGKSV. A Mg(2+)-binding site is contributed by S17. The active site involves K38. S42 provides a ligand contact to substrate. ATP contacts are provided by residues D55, 116–119, and 176–177; these read EGAG and ND. Positions 55 and 116 each coordinate Mg(2+).

Belongs to the dethiobiotin synthetase family. As to quaternary structure, homodimer. It depends on Mg(2+) as a cofactor.

Its subcellular location is the cytoplasm. It catalyses the reaction (7R,8S)-7,8-diammoniononanoate + CO2 + ATP = (4R,5S)-dethiobiotin + ADP + phosphate + 3 H(+). It functions in the pathway cofactor biosynthesis; biotin biosynthesis; biotin from 7,8-diaminononanoate: step 1/2. Catalyzes a mechanistically unusual reaction, the ATP-dependent insertion of CO2 between the N7 and N8 nitrogen atoms of 7,8-diaminopelargonic acid (DAPA, also called 7,8-diammoniononanoate) to form a ureido ring. In Serratia marcescens, this protein is ATP-dependent dethiobiotin synthetase BioD.